Consider the following 598-residue polypeptide: IQ calmodulin-binding motif-containing protein 1 (598 aa).

Residues 1 to 157 (MKPTGTDPRI…SLFWLLGGHV (157 aa)) are interaction with BBS1, BBS8 and BBS9. The interval 287–598 (QEVEEQKLHQ…NLFIGGTKPP (312 aa)) is interaction with CEP290, BBS1, BBS2, BBS4, BBS5, BBS7, BBS8 and BBS9. IQ domains follow at residues 294-317 (LHQA…LKKL), 318-338 (PSAV…MLLE), 387-416 (EEKS…SLIE), and 417-437 (YKAA…CRKK). Positions 336-373 (LLEINRQKEEEDLKLQLQLQRQRAMRLSRELQLSMLEI) form a coiled coil. Residues 530–598 (AEGKEPELFL…NLFIGGTKPP (69 aa)) are interaction with BBS1, BBS2, BBS4, BBS7, BBS8 and BBS9. Ser572 is modified (phosphoserine).

Interacts with CEP290/NPHP6; IQCB1/NPHP5 and CEP290 are proposed to form a functional NPHP5-6 module/NPHP6; localized to the centrosome. Interacts with calmodulin, ATXN10. Interacts with NPHP1, INVS, NPHP4 and RPGRIP1L; these interactions likely require additional interactors. Associates with the BBSome complex; interacts with BBS1, BBS2, BBS4, BBS5, BBS7, BBS8 and BBS9. As to expression, ubiquitously expressed in fetal and adult tissues. Localized to the outer segments and connecting cilia of photoreceptor cells. Up-regulated in a number of primary colorectal and gastric tumors.

The protein localises to the cytoplasm. It localises to the cytoskeleton. The protein resides in the microtubule organizing center. Its subcellular location is the centrosome. It is found in the centriole. Involved in ciliogenesis. The function in an early step in cilia formation depends on its association with CEP290/NPHP6. Involved in regulation of the BBSome complex integrity, specifically for presence of BBS2 and BBS5 in the complex, and in ciliary targeting of selected BBSome cargos. May play a role in controlling entry of the BBSome complex to cilia possibly implicating CEP290/NPHP6. In Homo sapiens (Human), this protein is IQ calmodulin-binding motif-containing protein 1 (IQCB1).